A 330-amino-acid polypeptide reads, in one-letter code: Methionyl-tRNA formyltransferase (330 aa).

112 to 115 (SLLP) contacts (6S)-5,6,7,8-tetrahydrofolate.

The protein belongs to the Fmt family.

It carries out the reaction L-methionyl-tRNA(fMet) + (6R)-10-formyltetrahydrofolate = N-formyl-L-methionyl-tRNA(fMet) + (6S)-5,6,7,8-tetrahydrofolate + H(+). Functionally, attaches a formyl group to the free amino group of methionyl-tRNA(fMet). The formyl group appears to play a dual role in the initiator identity of N-formylmethionyl-tRNA by promoting its recognition by IF2 and preventing the misappropriation of this tRNA by the elongation apparatus. The protein is Methionyl-tRNA formyltransferase of Alcanivorax borkumensis (strain ATCC 700651 / DSM 11573 / NCIMB 13689 / SK2).